The sequence spans 331 residues: 2-oxoglutarate-dependent dioxygenase (331 aa).

Positions 186 to 292 (PACPLRLLHY…RYSVVFFMDG (107 aa)) constitute a Fe2OG dioxygenase domain. Histidine 214, aspartate 216, and histidine 272 together coordinate Fe cation. Arginine 283 serves as a coordination point for 2-oxoglutarate.

This sequence belongs to the iron/ascorbate-dependent oxidoreductase family. Fe(2+) serves as cofactor.

It functions in the pathway mycotoxin biosynthesis. 2-oxoglutarate-dependent dioxygenase; part of the gene cluster that mediates the biosynthesis of the selective antifungal agent ascochitine, an o-quinone methide that plays a possible protective role against other microbial competitors in nature and is considered to be important for pathogenicity of legume-associated Didymella species. The pathway probably begins with the synthesis of a keto-aldehyde intermediate by the ascochitine non-reducing polyketide synthase pksAC from successive condensations of 4 malonyl-CoA units, presumably with a simple acetyl-CoA starter unit. Release of the keto-aldehyde intermediate is consistent with the presence of the C-terminal reductive release domain. The HR-PKS (orf7) probably makes a diketide starter unit which is passed to the non-reducing polyketide synthase pksAC for further extension, producing ascochital and ascochitine. The aldehyde dehydrogenase (orf1), the 2-oxoglutarate-dependent dioxygenase (orf3) and the dehydrogenase (orf9) are probably involved in subsequent oxidations of methyl groups to the carboxylic acid of the heterocyclic ring. The ascochitine gene cluster also includes a gene encoding a short peptide with a cupin domain (orf2) that is often found in secondary metabolite gene clusters and which function has still to be determined. The sequence is that of 2-oxoglutarate-dependent dioxygenase from Didymella fabae (Leaf and pod spot disease fungus).